We begin with the raw amino-acid sequence, 2176 residues long: Methyl-CpG-binding domain-containing protein 9 (2176 aa).

Positions 1-13 (MEPTDSTNEQLGD) are enriched in polar residues. 2 disordered regions span residues 1–20 (MEPTDSTNEQLGDTKTAAVK) and 28–85 (GIDL…RDAS). The PHD-type 1 zinc-finger motif lies at 83–133 (DASCGACGRPESIELVVVCDACERGFHMSCVNDGVEAAPSADWMCSDCRTG). Residues 86-131 (CGACGRPESIELVVVCDACERGFHMSCVNDGVEAAPSADWMCSDCR) form an RING-type 1; degenerate zinc finger. Residues 258–327 (RHFISERHGV…MDAEIRNENS (70 aa)) enclose the MBD domain. Positions 403–456 (GCPMQFEDFFVLSLGRIDIRQSYHNVNVIYPIGYKSCWHDKITGSLFTCEVSDG) constitute an FYR N-terminal domain. Residues 491-511 (EQNSDKLSNRRDSTQERDDDA) adopt a coiled-coil conformation. In terms of domain architecture, FYR C-terminal spans 550–698 (SSRVDFDKNL…ESCTNYRTLK (149 aa)). 3 short sequence motifs (nuclear localization signal) span residues 914–921 (SRRGRKKD), 1124–1131 (KKRTYISV), and 1256–1263 (YRKLECLS). The stretch at 1098 to 1137 (PTKKAVLSLLADIRGGDLVQRSIKGTKKRTYISVSDVIMK) is one Pumilio repeat. The region spanning 1130 to 1245 (SVSDVIMKKC…EKFKSLYEAE (116 aa)) is the Bromo domain. The stretch at 1251-1273 (QKLKDYRKLECLSAEMKKEIKDI) forms a coiled coil. The PHD-type 2 zinc-finger motif lies at 1287 to 1337 (EGVCKVCGVDKDDDSVLLCDTCDAEYHTYCLNPPLIRIPDGNWYCPSCVIA). Residues 1290–1335 (CKVCGVDKDDDSVLLCDTCDAEYHTYCLNPPLIRIPDGNWYCPSCV) form an RING-type 2; degenerate zinc finger. The Nuclear localization signal signature appears at 1337–1344 (AKRMAQEA). Residues 1410 to 1437 (QHLEQCAEAIIEMQQKLRSLSSEWKNAK) are a coiled coil. Disordered regions lie at residues 1472-1553 (GCDP…NLPE) and 1565-1595 (GRNHETHSPNSNAVELPTAHDASSQASQELQ). Polar residues-rich tracts occupy residues 1492-1513 (SSTAYLNKNQGKSPLETDTQPG), 1523-1532 (KISSPETISS), and 1585-1595 (DASSQASQELQ). A coiled-coil region spans residues 1588–1628 (SQASQELQACQQDLSATSNEIQNLQQSIRSIESQLLKQSIR). The Nuclear localization signal signature appears at 1761–1768 (EKRYGPCI). Residues 2136 to 2176 (IDETKPIISLPDQKSQPVSDSQERSSRVRRSGKKRKEPEGS) form a disordered region.

Interacts with histone H4. In terms of tissue distribution, expressed in leaves, buds, flowers and stems.

Its subcellular location is the nucleus. The enzyme catalyses L-lysyl-[protein] + acetyl-CoA = N(6)-acetyl-L-lysyl-[protein] + CoA + H(+). Functionally, probable transcriptional regulator that acts as a histone acetyltransferase. Mediates the acetylation of histone H3 and H4 of target loci (e.g. FLC). Involved in an auxin-independent regulation of shoot branching and flowering time. The protein is Methyl-CpG-binding domain-containing protein 9 (MBD9) of Arabidopsis thaliana (Mouse-ear cress).